An 895-amino-acid polypeptide reads, in one-letter code: Zyg eleven-related protein 1 (895 aa).

Disordered stretches follow at residues 58–78 (HGPA…PDQG) and 195–221 (RGQM…SDHQ). A compositionally biased stretch (low complexity) spans 205 to 220 (SPLSPSSQPSSIQSDH).

As to quaternary structure, interacts with elc-1. Part of an E3 ubiquitin ligase complex including zer-11, cul-2 and elc-1.

Acts as a target recruitment subunit in the E3 ubiquitin ligase complex zer-1-cul-2-elc-1. The protein is Zyg eleven-related protein 1 (zer-1) of Caenorhabditis elegans.